We begin with the raw amino-acid sequence, 74 residues long: UPF0352 protein HAPS_0210 (74 aa).

The protein belongs to the UPF0352 family.

The protein is UPF0352 protein HAPS_0210 of Glaesserella parasuis serovar 5 (strain SH0165) (Haemophilus parasuis).